A 103-amino-acid chain; its full sequence is Large ribosomal subunit protein bL21 (103 aa).

The protein belongs to the bacterial ribosomal protein bL21 family. Part of the 50S ribosomal subunit. Contacts protein L20.

Functionally, this protein binds to 23S rRNA in the presence of protein L20. This is Large ribosomal subunit protein bL21 from Teredinibacter turnerae (strain ATCC 39867 / T7901).